A 236-amino-acid polypeptide reads, in one-letter code: CHD1 helical C-terminal domain containing protein 1 (236 aa).

Residues 44-145 form a CHD1 helical C-terminal domain (CHCT) region; sequence LDQDTFKTCK…SSQPAKFLVT (102 aa). The segment at 184–236 is disordered; it reads LSNMQTPGQGSPLPGQPRSQDHVKKDSLRELSQKPKLKRKRIKEAPETPETEP. The span at 202-216 shows a compositional bias: basic and acidic residues; sequence SQDHVKKDSLRELSQ.

It localises to the cytoplasm. The protein resides in the nucleus. In terms of biological role, may play a role in regulation of apoptosis. The sequence is that of CHD1 helical C-terminal domain containing protein 1 from Homo sapiens (Human).